A 614-amino-acid polypeptide reads, in one-letter code: Putative Na(+)/H(+) antiporter YjbQ (614 aa).

13 consecutive transmembrane segments (helical) span residues 3-23 (HTSVASLVVVLIVAFLTPILL), 32-52 (VVVAEIIMGLIIGKSGLNLVV), 57-77 (WLQTLSMLGFIFLMFLSGLEI), 107-127 (IFVGIFILSLLLSYGFVLAGF), 130-150 (NAFLMTLIISTISLGVVVPTL), 163-183 (IILLVAVIADLATMILLAVFS), 193-213 (MWLLMILFAAGVVLYFFGRVF), 225-244 (GTIQIGTRAIFTLIIVLVAL), 248-267 (LGAENILGAFLAGVLVSLLS), 282-302 (GFLIPIFFVMVGVKLDIWTLF), 307-327 (ILIMIPLLLLALLVSKIIPVM), 338-358 (IFASGFLLTSTLSLVIAAATI), and 368-388 (NMSGALILVAVIASIFTPICF). Residues 401–519 (KKTITFIGAN…EQGISIFSIL (119 aa)) enclose the RCK N-terminal domain. The RCK C-terminal domain occupies 533-614 (PGVMKLLTNQ…VTDLKKTLEG (82 aa)).

Belongs to the monovalent cation:proton antiporter 2 (CPA2) transporter (TC 2.A.37) family.

Its subcellular location is the cell membrane. Its activity is regulated as follows. Binds cyclic di-AMP (c-di-AMP), which may regulate the transporter activity. Functionally, probable Na(+)/H(+) antiporter. The chain is Putative Na(+)/H(+) antiporter YjbQ from Bacillus subtilis (strain 168).